The following is a 164-amino-acid chain: Phosphopantetheine adenylyltransferase (164 aa).

S9 contributes to the substrate binding site. ATP-binding positions include 9–10 (SF) and H17. Positions 41, 73, and 87 each coordinate substrate. ATP-binding positions include 88–90 (GLR), E98, and 123–129 (YSYLSSS).

It belongs to the bacterial CoaD family. As to quaternary structure, homohexamer. Mg(2+) is required as a cofactor.

Its subcellular location is the cytoplasm. It catalyses the reaction (R)-4'-phosphopantetheine + ATP + H(+) = 3'-dephospho-CoA + diphosphate. It functions in the pathway cofactor biosynthesis; coenzyme A biosynthesis; CoA from (R)-pantothenate: step 4/5. Its function is as follows. Reversibly transfers an adenylyl group from ATP to 4'-phosphopantetheine, yielding dephospho-CoA (dPCoA) and pyrophosphate. This chain is Phosphopantetheine adenylyltransferase, found in Clostridium botulinum (strain 657 / Type Ba4).